The primary structure comprises 715 residues: Phosphoribosylformylglycinamidine synthase subunit PurL (715 aa).

His33 is a catalytic residue. Position 36 (Tyr36) interacts with ATP. Glu77 is a binding site for Mg(2+). Residues 78-81 (SHNH) and Arg100 contribute to the substrate site. His79 acts as the Proton acceptor in catalysis. Mg(2+) is bound at residue Asp101. Gln225 is a substrate binding site. Asp253 contacts Mg(2+). Residue 297-299 (ESQ) coordinates substrate. Positions 475 and 512 each coordinate ATP. Asn513 is a Mg(2+) binding site. Residue Ser515 participates in substrate binding.

This sequence belongs to the FGAMS family. As to quaternary structure, monomer. Part of the FGAM synthase complex composed of 1 PurL, 1 PurQ and 2 PurS subunits.

The protein localises to the cytoplasm. The enzyme catalyses N(2)-formyl-N(1)-(5-phospho-beta-D-ribosyl)glycinamide + L-glutamine + ATP + H2O = 2-formamido-N(1)-(5-O-phospho-beta-D-ribosyl)acetamidine + L-glutamate + ADP + phosphate + H(+). The protein operates within purine metabolism; IMP biosynthesis via de novo pathway; 5-amino-1-(5-phospho-D-ribosyl)imidazole from N(2)-formyl-N(1)-(5-phospho-D-ribosyl)glycinamide: step 1/2. Part of the phosphoribosylformylglycinamidine synthase complex involved in the purines biosynthetic pathway. Catalyzes the ATP-dependent conversion of formylglycinamide ribonucleotide (FGAR) and glutamine to yield formylglycinamidine ribonucleotide (FGAM) and glutamate. The FGAM synthase complex is composed of three subunits. PurQ produces an ammonia molecule by converting glutamine to glutamate. PurL transfers the ammonia molecule to FGAR to form FGAM in an ATP-dependent manner. PurS interacts with PurQ and PurL and is thought to assist in the transfer of the ammonia molecule from PurQ to PurL. The sequence is that of Phosphoribosylformylglycinamidine synthase subunit PurL from Methanosarcina acetivorans (strain ATCC 35395 / DSM 2834 / JCM 12185 / C2A).